A 221-amino-acid polypeptide reads, in one-letter code: Cytidylate kinase 1 (221 aa).

7–15 (GPSASGKSS) serves as a coordination point for ATP.

This sequence belongs to the cytidylate kinase family. Type 1 subfamily.

The protein localises to the cytoplasm. It carries out the reaction CMP + ATP = CDP + ADP. It catalyses the reaction dCMP + ATP = dCDP + ADP. The chain is Cytidylate kinase 1 from Borreliella burgdorferi (strain ATCC 35210 / DSM 4680 / CIP 102532 / B31) (Borrelia burgdorferi).